The following is a 431-amino-acid chain: Adenylosuccinate lyase (431 aa).

Residues 4–5, 67–69, and 93–94 contribute to the N(6)-(1,2-dicarboxyethyl)-AMP site; these read RY, RHD, and TS. Histidine 141 functions as the Proton donor/acceptor in the catalytic mechanism. Glutamine 212 contributes to the N(6)-(1,2-dicarboxyethyl)-AMP binding site. Serine 262 acts as the Proton donor/acceptor in catalysis. Residues serine 263, 268-270, asparagine 276, and 307-311 each bind N(6)-(1,2-dicarboxyethyl)-AMP; these read KRN and SAERI.

The protein belongs to the lyase 1 family. Adenylosuccinate lyase subfamily. As to quaternary structure, homodimer and homotetramer. Residues from neighboring subunits contribute catalytic and substrate-binding residues to each active site.

It carries out the reaction N(6)-(1,2-dicarboxyethyl)-AMP = fumarate + AMP. The enzyme catalyses (2S)-2-[5-amino-1-(5-phospho-beta-D-ribosyl)imidazole-4-carboxamido]succinate = 5-amino-1-(5-phospho-beta-D-ribosyl)imidazole-4-carboxamide + fumarate. It functions in the pathway purine metabolism; AMP biosynthesis via de novo pathway; AMP from IMP: step 2/2. Its pathway is purine metabolism; IMP biosynthesis via de novo pathway; 5-amino-1-(5-phospho-D-ribosyl)imidazole-4-carboxamide from 5-amino-1-(5-phospho-D-ribosyl)imidazole-4-carboxylate: step 2/2. In terms of biological role, catalyzes two reactions in de novo purine nucleotide biosynthesis. Catalyzes the breakdown of 5-aminoimidazole- (N-succinylocarboxamide) ribotide (SAICAR or 2-[5-amino-1-(5-phospho-beta-D-ribosyl)imidazole-4-carboxamido]succinate) to 5-aminoimidazole-4-carboxamide ribotide (AICAR or 5-amino-1-(5-phospho-beta-D-ribosyl)imidazole-4-carboxamide) and fumarate, and of adenylosuccinate (ADS or N(6)-(1,2-dicarboxyethyl)-AMP) to adenosine monophosphate (AMP) and fumarate. The polypeptide is Adenylosuccinate lyase (purB) (Staphylococcus aureus (strain USA300)).